Consider the following 338-residue polypeptide: tRNA N6-adenosine threonylcarbamoyltransferase (338 aa).

His-111 and His-115 together coordinate Fe cation. Residues 134–138 (LVSGG), Asp-167, Gly-180, and Asn-272 contribute to the substrate site. Asp-300 contacts Fe cation.

Belongs to the KAE1 / TsaD family. The cofactor is Fe(2+).

It is found in the cytoplasm. The enzyme catalyses L-threonylcarbamoyladenylate + adenosine(37) in tRNA = N(6)-L-threonylcarbamoyladenosine(37) in tRNA + AMP + H(+). Required for the formation of a threonylcarbamoyl group on adenosine at position 37 (t(6)A37) in tRNAs that read codons beginning with adenine. Is involved in the transfer of the threonylcarbamoyl moiety of threonylcarbamoyl-AMP (TC-AMP) to the N6 group of A37, together with TsaE and TsaB. TsaD likely plays a direct catalytic role in this reaction. The chain is tRNA N6-adenosine threonylcarbamoyltransferase from Vibrio atlanticus (strain LGP32) (Vibrio splendidus (strain Mel32)).